The sequence spans 34 residues: Mu-theraphotoxin-Df1a (34 aa).

Cystine bridges form between Cys-2–Cys-16, Cys-9–Cys-21, and Cys-15–Cys-28. Phe-34 is modified (phenylalanine amide).

This sequence belongs to the neurotoxin 10 (Hwtx-1) family. 54 (ProTx-1) subfamily. C-terminal amidation is important for the high potency of the toxin. In terms of tissue distribution, expressed by the venom gland.

The protein localises to the secreted. Functionally, inhibits sodium channel Nav1.7/SCN9A with high potency (IC(50)=117 nM) and Nav1.2/SCN2A, Nav1.3/SCN3A, Nav1.6/SCN8A and Nav1.5/SCN5 with weaker potency. Also inhibits voltage-gated calcium channel Cav3.1/CACNA1G, Cav3.2/CACNA1H and Cav3.3/CACNA1I. The polypeptide is Mu-theraphotoxin-Df1a (Davus fasciatus (Costa Rican tiger rump)).